We begin with the raw amino-acid sequence, 259 residues long: Protein N-terminal and lysine N-methyltransferase efm7 (259 aa).

Residues tryptophan 53, 80–82 (GAA), aspartate 102, tryptophan 138, and alanine 164 contribute to the S-adenosyl-L-methionine site.

Belongs to the class I-like SAM-binding methyltransferase superfamily. EFM7 family.

It localises to the cytoplasm. In terms of biological role, S-adenosyl-L-methionine-dependent protein methyltransferase that trimethylates the N-terminal glycine 'Gly-2' of elongation factor 1-alpha, before also catalyzing the mono- and dimethylation of 'Lys-3'. The polypeptide is Protein N-terminal and lysine N-methyltransferase efm7 (Emericella nidulans (strain FGSC A4 / ATCC 38163 / CBS 112.46 / NRRL 194 / M139) (Aspergillus nidulans)).